A 309-amino-acid polypeptide reads, in one-letter code: Glutaminase (309 aa).

Residues S64, N114, E160, N167, Y191, Y243, and V261 each contribute to the substrate site.

This sequence belongs to the glutaminase family. As to quaternary structure, homotetramer.

The enzyme catalyses L-glutamine + H2O = L-glutamate + NH4(+). This chain is Glutaminase, found in Methylobacterium radiotolerans (strain ATCC 27329 / DSM 1819 / JCM 2831 / NBRC 15690 / NCIMB 10815 / 0-1).